A 79-amino-acid chain; its full sequence is Small serum protein 3 (79 aa).

The first 19 residues, 1-19 (MKVFFILIIFSFTLATCQG), serve as a signal peptide directing secretion. 3 cysteine pairs are disulfide-bonded: Cys21–Cys72, Cys39–Cys64, and Cys62–Cys71.

It localises to the secreted. Shows an slight inhibitory effect toward the metalloproteinase brevilysin H6, but does not inhibit the metalloproteinases thermolysin, HR1A and HR1B. The sequence is that of Small serum protein 3 from Protobothrops flavoviridis (Habu).